Consider the following 509-residue polypeptide: Metal transporter Nramp3 (509 aa).

Over residues M1–I12 the composition is skewed to low complexity. The tract at residues M1–T25 is disordered. Positions N13–D23 are enriched in acidic residues. Helical transmembrane passes span L56–L76, A84–V104, M133–G153, I165–L185, L193–G213, A239–V259, I285–F305, Y327–Q347, I383–L403, W406–V426, I444–F464, and V472–I492.

It belongs to the NRAMP (TC 2.A.55) family. As to expression, expressed in vascular tissues.

Its subcellular location is the vacuole membrane. In terms of biological role, vacuolar metal transporter involved in intracellular metal homeostasis. Can transport iron (Fe), manganese (Mn) and cadmium (Cd). Regulates metal accumulation under Fe starvation. Acts redundantly with NRAMP4 to mobilize vacuolar Fe and provide sufficient Fe during seed germination. In association with NRAMP4, required for optimal growth and photosynthesis under Mn deficiency. Exports Mn from vacuoles in leaf mesophyll cells, making Mn available for functional photosystem II in chloroplasts. Involved in basal resistance to the bacterial pathogen E.chrysanthemi. The sequence is that of Metal transporter Nramp3 (NRAMP3) from Arabidopsis thaliana (Mouse-ear cress).